The chain runs to 121 residues: Small ribosomal subunit protein uS13 (121 aa).

The tract at residues 94 to 121 (GLPVRGQRTRTNSRTRKGPKKGAAALKK) is disordered.

This sequence belongs to the universal ribosomal protein uS13 family. As to quaternary structure, part of the 30S ribosomal subunit. Forms a loose heterodimer with protein S19. Forms two bridges to the 50S subunit in the 70S ribosome.

Functionally, located at the top of the head of the 30S subunit, it contacts several helices of the 16S rRNA. In the 70S ribosome it contacts the 23S rRNA (bridge B1a) and protein L5 of the 50S subunit (bridge B1b), connecting the 2 subunits; these bridges are implicated in subunit movement. Contacts the tRNAs in the A and P-sites. The chain is Small ribosomal subunit protein uS13 from Leptothrix cholodnii (strain ATCC 51168 / LMG 8142 / SP-6) (Leptothrix discophora (strain SP-6)).